The following is a 1497-amino-acid chain: ABC multidrug transporter C (1497 aa).

The segment covering 1–13 (MSLLGTINPNINP) has biased composition (polar residues). The tract at residues 1–21 (MSLLGTINPNINPERTVAGRG) is disordered. N-linked (GlcNAc...) asparagine glycosylation is found at asparagine 137 and asparagine 336. An ABC transporter 1 domain is found at 158-412 (LEVGTLVRRI…FTNMGFECPE (255 aa)). Helical transmembrane passes span 523–543 (LTMS…SVFY), 557–577 (ALLF…ILTL), 599–621 (AIAS…NLTL), 632–652 (GAFF…SMLF), and 665–685 (ALVP…FTIP). N-linked (GlcNAc...) asparagine glycosylation occurs at asparagine 762. A helical membrane pass occupies residues 777 to 797 (GIMFGFMFFFMFTYLTATEYI). Positions 815 to 843 (QPTGSHDVEKSPEVSSAAKTDEASSKEAT) are disordered. Residues 853–1096 (FQWKDVCYDI…LASYFERNGA (244 aa)) form the ABC transporter 2 domain. 889–896 (GVSGAGKT) provides a ligand contact to ATP. 5 helical membrane passes run 1192-1212 (YIYS…FSFF), 1226-1246 (FSIF…MPNF), 1273-1293 (IIVE…CWYY), 1313-1333 (LMFL…HMMI), and 1352-1372 (LCLI…FWIF). Asparagine 1411 is a glycosylation site (N-linked (GlcNAc...) asparagine). Residues 1464–1484 (FGIMWAYIIFNIFAAVFIYWL) traverse the membrane as a helical segment.

This sequence belongs to the ABC transporter superfamily. ABCG family. PDR (TC 3.A.1.205) subfamily.

It is found in the cell membrane. It catalyses the reaction fluconazole(in) + ATP + H2O = fluconazole(out) + ADP + phosphate + H(+). The catalysed reaction is itraconazole(in) + ATP + H2O = itraconazole(out) + ADP + phosphate + H(+). It carries out the reaction voriconazole(in) + ATP + H2O = voriconazole(out) + ADP + phosphate + H(+). The efflux inhibitor FK506 impairs the transport activity. In terms of biological role, pleiotropic ABC efflux transporter that shows a strong substrate specificity for the azole class of drugs such as lotrimazole (CLT), fluconazole (FLC), itraconazole (ITC), ketoconazole (KTC), posaconazole (POS), tebuconazole (TEBZ), and voriconazole (VRC). Is also able to transport rhodamine 6G (R-6G), a known substrate for many ABC transporters. Required for normal pathogenesis in a Galleria mellonella (greater wax moth) infection model. The chain is ABC multidrug transporter C from Aspergillus fumigatus (strain ATCC MYA-4609 / CBS 101355 / FGSC A1100 / Af293) (Neosartorya fumigata).